A 368-amino-acid polypeptide reads, in one-letter code: Aminomethyltransferase (368 aa).

The protein belongs to the GcvT family. In terms of assembly, the glycine cleavage system is composed of four proteins: P, T, L and H.

The catalysed reaction is N(6)-[(R)-S(8)-aminomethyldihydrolipoyl]-L-lysyl-[protein] + (6S)-5,6,7,8-tetrahydrofolate = N(6)-[(R)-dihydrolipoyl]-L-lysyl-[protein] + (6R)-5,10-methylene-5,6,7,8-tetrahydrofolate + NH4(+). The glycine cleavage system catalyzes the degradation of glycine. The chain is Aminomethyltransferase from Thermoanaerobacter sp. (strain X514).